Consider the following 370-residue polypeptide: Aminomethyltransferase (370 aa).

It belongs to the GcvT family. As to quaternary structure, the glycine cleavage system is composed of four proteins: P, T, L and H.

It carries out the reaction N(6)-[(R)-S(8)-aminomethyldihydrolipoyl]-L-lysyl-[protein] + (6S)-5,6,7,8-tetrahydrofolate = N(6)-[(R)-dihydrolipoyl]-L-lysyl-[protein] + (6R)-5,10-methylene-5,6,7,8-tetrahydrofolate + NH4(+). Its function is as follows. The glycine cleavage system catalyzes the degradation of glycine. This chain is Aminomethyltransferase, found in Prochlorococcus marinus (strain MIT 9515).